A 138-amino-acid chain; its full sequence is Succinate dehydrogenase assembly factor 4, mitochondrial (138 aa).

The N-terminal 32 residues, 1–32, are a transit peptide targeting the mitochondrion; the sequence is MLCAIKSTGYRYPRTGALNLLRGRPFNMATRK. Residues 71–98 are compositionally biased toward polar residues; the sequence is QATGDRTKESLNSPLLTKNDIGSFSPEF. The segment at 71–138 is disordered; the sequence is QATGDRTKES…YSFNGRVTDF (68 aa).

Belongs to the SDHAF4 family. As to quaternary structure, interacts with SDH1 in its FAD-bound form.

The protein resides in the mitochondrion matrix. Plays an essential role in the assembly of succinate dehydrogenase (SDH), an enzyme complex (also referred to as respiratory complex II) that is a component of both the tricarboxylic acid (TCA) cycle and the mitochondrial electron transport chain, and which couples the oxidation of succinate to fumarate with the reduction of ubiquinone (coenzyme Q) to ubiquinol. Binds to the flavoprotein subunit SDH1 in its FAD-bound form, blocking the generation of excess reactive oxygen species (ROS) and facilitating its assembly with the iron-sulfur protein subunit SDH2 into the SDH catalytic dimer. The sequence is that of Succinate dehydrogenase assembly factor 4, mitochondrial from Saccharomyces cerevisiae (strain ATCC 204508 / S288c) (Baker's yeast).